A 481-amino-acid chain; its full sequence is tRNA pseudouridine(38/39) synthase (481 aa).

An N-acetylalanine modification is found at A2. The span at 29–40 (KKEQANNKDSNI) shows a compositional bias: basic and acidic residues. The interval 29–54 (KKEQANNKDSNIRENSSGAGGKPKRA) is disordered. D118 functions as the Nucleophile in the catalytic mechanism. Y195 serves as a coordination point for substrate. T456 carries the phosphothreonine modification.

This sequence belongs to the tRNA pseudouridine synthase TruA family.

The protein localises to the nucleus. The enzyme catalyses uridine(38/39) in tRNA = pseudouridine(38/39) in tRNA. Its function is as follows. Formation of pseudouridine at position 39 in the anticodon stem and loop of transfer RNAs. This Bos taurus (Bovine) protein is tRNA pseudouridine(38/39) synthase (PUS3).